The chain runs to 177 residues: Ubiquitin-conjugating enzyme E2 C (177 aa).

The disordered stretch occupies residues 1–31 (MSGQNIDPAANQVRQKERPRDMTTSKERHSV). The segment covering 14-30 (RQKERPRDMTTSKERHS) has biased composition (basic and acidic residues). In terms of domain architecture, UBC core spans 30–175 (SVSKRLQQEL…LHEKYKTAQS (146 aa)). Cys-114 acts as the Glycyl thioester intermediate in catalysis.

The protein belongs to the ubiquitin-conjugating enzyme family. As to quaternary structure, component of the APC/C complex. Post-translationally, autoubiquitinated by the APC/C complex, leading to its degradation by the proteasome.

The catalysed reaction is S-ubiquitinyl-[E1 ubiquitin-activating enzyme]-L-cysteine + [E2 ubiquitin-conjugating enzyme]-L-cysteine = [E1 ubiquitin-activating enzyme]-L-cysteine + S-ubiquitinyl-[E2 ubiquitin-conjugating enzyme]-L-cysteine.. The enzyme catalyses S-ubiquitinyl-[E1 ubiquitin-activating enzyme]-L-cysteine + [acceptor protein]-L-lysine = [E1 ubiquitin-activating enzyme]-L-cysteine + N(6)-monoubiquitinyl-[acceptor protein]-L-lysine.. Its pathway is protein modification; protein ubiquitination. Catalyzes the covalent attachment of ubiquitin to other proteins. Acts as an essential factor of the anaphase promoting complex/cyclosome (APC/C), a cell cycle-regulated ubiquitin ligase that is essential for the transition from metaphase to anaphase in mitosis. Involved in both degradation of proteins responsible for maintaining sister chromatid cohesion at the onset of anaphase and of mitotic cyclins A and B at the exit of mitosis. Acts by initiating polyubiquitin chains on APC/C substrates, leading to the degradation of APC/C substrates by the proteasome and promoting mitotic exit. The polypeptide is Ubiquitin-conjugating enzyme E2 C (UBE2C) (Spisula solidissima (Atlantic surf-clam)).